Here is an 878-residue protein sequence, read N- to C-terminus: MAPAPAPAGSADQFRGQARLPRFAAPRRYELRLRPDLDACVFTGDASVVVDVSAPTRFLVLNAADLAVDRASIRFQGLAPTEVSLFEDDEILVLEFDGELPLGEGVLAMDFNGTLNDQMRGFYRSKYEYKGETKNMAVTQFEAVDARRCFPCWDEPAFKAKFKLTLEVPSELVALSNMPVACETIAGPIKTIHYEESPLMSTYLVAIVVGLFDYVEGVTSEGNKVRVYTQVGKSSQGKFALDIGVKSLNFYKDYFDTPYPLPKLDMVAIPDFAAGAMENYGLVTYREVSLLFDEQSSSASFKQNVAITVAHELAHQWFGNLVTMEWWTHLWLNEGFATWMSHLSVDSFFPQWNIWTQFLDSTTSALKLDSQAESHPIEVEIHHASEVDEIFDAISYDKGASVIRMLQSYLGAERFQKALTSYIKKYAYSNAKTEDLWAVLEEVSGEPVKDLMTTWTKQQGYPVISVKLKGHDLELEQDQFLLNGTSGAGIWIVPITLGCCSHDKQKRLLLKHKHDNIKAIVSQCDSRQKGGNFWIKLNIDETGFYRVKYDDELTAALRNALQAKKLSLMDEIGIVDDAHALSIACKQTLSSLLHLLYAFRDEADYSVLSHINSVTSSVAKISIDATPDLAGDIKQLFIKLLLPPAKKLGWDPKDGESHLNAMLRPMLLVALVQLGHDKTINEGFRRFQIFFDDRNTSLLTPDTRKAAYLSVMHNVSSTNRSGYDALLKVYRKSAEGEEKLRVLGTLSSCQDKDIVLESLNLIFTDEVRNQDAYRVLGGVIIEARETAWSWLKENWDRISEAFSGSSLISDFIRSIVTLFTSKEKEAEISQFFATRTKPGYERTLKQSLERVLINARWIEGIRGEAKLAQTVHELLHKP.

The segment at 102 to 209 (LGEGVLAMDF…MSTYLVAIVV (108 aa)) is required for membrane association. Residues Glu-142 and 275-279 (GAMEN) contribute to the substrate site. His-311 provides a ligand contact to Zn(2+). Glu-312 serves as the catalytic Proton acceptor. Zn(2+) is bound by residues His-315 and Glu-334. A Dileucine internalization motif motif is present at residues 726–727 (LL).

This sequence belongs to the peptidase M1 family. In terms of assembly, homodimer. Requires Zn(2+) as cofactor.

Its subcellular location is the membrane. The protein localises to the microsome membrane. It localises to the cytoplasm. The enzyme catalyses Release of an N-terminal amino acid, Xaa-|-Yaa- from a peptide, amide or arylamide. Xaa is preferably Ala, but may be most amino acids including Pro (slow action). When a terminal hydrophobic residue is followed by a prolyl residue, the two may be released as an intact Xaa-Pro dipeptide.. This is Aminopeptidase M1-C from Oryza sativa subsp. japonica (Rice).